Here is a 44-residue protein sequence, read N- to C-terminus: Endochitinase 1 (44 aa).

The protein belongs to the glycosyl hydrolase 19 family. Chitinase class I subfamily.

The enzyme catalyses Random endo-hydrolysis of N-acetyl-beta-D-glucosaminide (1-&gt;4)-beta-linkages in chitin and chitodextrins.. Defense against chitin-containing fungal pathogens. The polypeptide is Endochitinase 1 (Capsicum chinense (Scotch bonnet)).